A 268-amino-acid polypeptide reads, in one-letter code: Bis(5'-nucleosyl)-tetraphosphatase, symmetrical (268 aa).

This sequence belongs to the Ap4A hydrolase family.

It catalyses the reaction P(1),P(4)-bis(5'-adenosyl) tetraphosphate + H2O = 2 ADP + 2 H(+). Functionally, hydrolyzes diadenosine 5',5'''-P1,P4-tetraphosphate to yield ADP. The sequence is that of Bis(5'-nucleosyl)-tetraphosphatase, symmetrical from Vibrio campbellii (strain ATCC BAA-1116).